The chain runs to 471 residues: MKIKTRFAPSPTGYLHVGGARTALYSWLFARHHGGEFVLRIEDTDLERSTPEAIEAIMDGMNWLNLEWDEGPYFQTKRFDRYNAVIDEMLEAGTAYKCYCSKERLEQLREDQMAKGEKPRYDGRCRHSHEHHADDEPCVVRFANPQDGSVIFDDQIRGPIEFSNQELDDLIIRRTDGSPTYNFCVVVDDWDMEITHVIRGEDHINNTPRQINILKALNAPVPMYAHVSMINGDDGKKLSKRHGAVSVMQYRDDGYLPEALLNYLVRLGWSSGDQEIFTREEMIKLFSLGAVSKSASAFNTDKLLWLNHHYINTLAPEYVATHLQWHIEQENIDTRNGPQLAELVKLLGERCKTLKEMAQSCRYFYEDFSEFDADAAKKHLRPVARQPLEVVRDKLSAITDWSAENVHHAIQATADELEVGMGKVGMPLRVAVTGAGQSPALDVTVHAIGKTRSIERINKALGFIAERESQQ.

Residues 9 to 19 (PSPTGYLHVGG) carry the 'HIGH' region motif. Residues Cys-98, Cys-100, Cys-125, and His-127 each coordinate Zn(2+). A 'KMSKS' region motif is present at residues 237–241 (KLSKR). Position 240 (Lys-240) interacts with ATP.

Belongs to the class-I aminoacyl-tRNA synthetase family. Glutamate--tRNA ligase type 1 subfamily. In terms of assembly, monomer. Zn(2+) serves as cofactor.

The protein resides in the cytoplasm. It catalyses the reaction tRNA(Glu) + L-glutamate + ATP = L-glutamyl-tRNA(Glu) + AMP + diphosphate. Its function is as follows. Catalyzes the attachment of glutamate to tRNA(Glu) in a two-step reaction: glutamate is first activated by ATP to form Glu-AMP and then transferred to the acceptor end of tRNA(Glu). This Salmonella schwarzengrund (strain CVM19633) protein is Glutamate--tRNA ligase.